We begin with the raw amino-acid sequence, 148 residues long: MNLHFYSTLRFTVALAAGLLFGFGLALSEMINPIRVLSFLNVASGHWNPSLLFVLGSALAVAFPGMALQRRLKRPLLDECFHLPSKKVIDRRIVFGSAIFGTGWGLTGLCPGPAIASLSTGLGSVLLFVAAMAAGMIIHDRIVVRSLS.

Helical transmembrane passes span 11–31 (FTVA…SEMI), 48–68 (NPSL…GMAL), 93–113 (IVFG…CPGP), and 118–138 (LSTG…GMII).

It belongs to the TsuA/YedE (TC 9.B.102) family.

It localises to the cell inner membrane. This is Probable transporter PD_1893 from Xylella fastidiosa (strain Temecula1 / ATCC 700964).